The chain runs to 209 residues: Redox-sensing transcriptional repressor Rex (209 aa).

The segment at residues 16–55 is a DNA-binding region (H-T-H motif); the sequence is LYYRFIQNLSLSGKQRVSSAELSEAVKVDSATIRRDFSYF. Residue 90–95 participates in NAD(+) binding; it reads GVGNLG.

It belongs to the transcriptional regulatory Rex family. Homodimer.

Its subcellular location is the cytoplasm. Its function is as follows. Modulates transcription in response to changes in cellular NADH/NAD(+) redox state. The chain is Redox-sensing transcriptional repressor Rex from Bacillus cereus (strain ATCC 10987 / NRS 248).